A 251-amino-acid polypeptide reads, in one-letter code: Adenosine 5'-phosphosulfate reductase (251 aa).

Residues Cys121, Cys122, Cys204, and Cys207 each contribute to the [4Fe-4S] cluster site. Catalysis depends on Cys232, which acts as the Nucleophile; cysteine thiosulfonate intermediate.

This sequence belongs to the PAPS reductase family. CysH subfamily. [4Fe-4S] cluster is required as a cofactor.

Its subcellular location is the cytoplasm. The catalysed reaction is [thioredoxin]-disulfide + sulfite + AMP + 2 H(+) = adenosine 5'-phosphosulfate + [thioredoxin]-dithiol. The protein operates within sulfur metabolism; hydrogen sulfide biosynthesis; sulfite from sulfate. In terms of biological role, catalyzes the formation of sulfite from adenosine 5'-phosphosulfate (APS) using thioredoxin as an electron donor. This Sinorhizobium fredii (strain USDA 257) protein is Adenosine 5'-phosphosulfate reductase.